The chain runs to 543 residues: MAVNSASYSRWCCFADSWQREKLASMESPEEPGASMDENYFVNYTFKDRSHSGRVAQGTMKLCLEEELFADVTISVEGREFQLHRLVLSAQSCFFRSMFTSNLKEAHNRVIVLQDVSESVFQLLVDYIYHGTVKLRAEELQEIYEVSDMYQLTSLFEECSRFLARTVQVGNCLQVMWLADRHSDPELYTAAKHCAKTHLAQLQNTEEFLHLPHHLLTDIISDGVPCSQNPTEAIEAWINFNKEEREAFAESLRTSLKEIGENVHIYLIGKESSRTHSLAVSLHCAEDDSISVSGQNSLCHQITAACKHGGDLYVVGGSIPRRMWKCNNATVDWEWCAPLPRDRLRHTLVSVPGKDAIYSLGGKTLQDTLSNAVIYYRVGDNVWTETTQLEVAVSGAAGANLNGIIYLLGGEENDLDFFTKPSRLIQCFDTETDKCHVKPYVLPFAGHMHAAVHKDLVFIVAEGDSLVCYNPLLDSFTRLCLPEAWSSAPSLWKIASRNGSIYVFRDRYKKGDANTYKLDPATSAVTVTRGIKVLLTNLQFVLA.

Residues 70–137 enclose the BTB domain; sequence ADVTISVEGR…IYHGTVKLRA (68 aa). A BACK domain is found at 172–264; the sequence is CLQVMWLADR…SLKEIGENVH (93 aa). Kelch repeat units follow at residues 264-310, 311-353, 356-403, 405-455, and 457-505; these read HIYL…KHGG, DLYV…SVPG, AIYS…NLNG, IYLL…VHKD, and VFIV…YVFR.

As to quaternary structure, component of the BCR(KBTBD4) E3 ubiquitin ligase complex, at least composed of CUL3, KBTBD4 and RBX1.

Its function is as follows. Substrate-specific adapter of a BCR (BTB-CUL3-RBX1) E3 ubiquitin ligase complex which targets CoREST corepressor complex components RCOR1, KDM1A/LSD1 and HDAC2 for proteasomal degradation. RCOR1 is likely to be the primary target while degradation of KDM1A and HDAC2 is likely due to their association with RCOR1. Also targets RCOR3, MIER2 and MIER3 for proteasomal degradation as well as associated proteins ZNF217 and RREB1. Degradation is dependent on the presence of an ELM2 domain in the target proteins. The protein is Kelch repeat and BTB domain-containing protein 4 (KBTBD4) of Macaca fascicularis (Crab-eating macaque).